The following is a 400-amino-acid chain: Large envelope protein (400 aa).

Methionine 1 bears the N-acetylmethionine mark. Glycine 2 carries N-myristoyl glycine; by host lipidation. Residues 2–119 are pre-S1; the sequence is GAPLSTTRRG…PPLRDTHPQA (118 aa). The tract at residues 2 to 174 is pre-S; it reads GAPLSTTRRG…FLKTGGPATN (173 aa). Over 2–181 the chain is Virion surface; in external conformation; sequence GAPLSTTRRG…ATNMDNITSG (180 aa). Over 2-253 the chain is Intravirion; in internal conformation; it reads GAPLSTTRRG…PGYRWMCLRR (252 aa). Proline 4 carries N-linked (GlcNAc...) asparagine glycosylation. Residues 84 to 114 are disordered; sequence VLTTLPADPPPASTNRRSGRKPTPVSPPLRD. The pre-S2 stretch occupies residues 120–174; the sequence is MQWNSTQFHQALLDPRVRALYFPAGGSSSETQNPAPTIASLTSSIFLKTGGPATN. Residues 182 to 202 form a helical membrane-spanning segment; the sequence is LLGPLLVLQAVCFLLTKILTI. Over 203–253 the chain is Intravirion; in external conformation; that stretch reads PQSLDSWWTSLNFLGGTPGCPGQNSQSPTSNHLPTSCPPTCPGYRWMCLRR. The chain crosses the membrane as a helical span at residues 254–274; sequence FIIFLFILLLCLIFLLVLVDY. Topologically, residues 275–348 are virion surface; the sequence is QGMLPVCPPL…WASARFSWLS (74 aa). Asparagine 320 carries N-linked (GlcNAc...) asparagine; by host glycosylation. Residues 349-369 traverse the membrane as a helical segment; the sequence is LLVQFVQWCVGLSPTVWLLVI. The Intravirion segment spans residues 370 to 375; it reads WMIWYW. Residues 376 to 398 traverse the membrane as a helical segment; the sequence is GPNLCSILSPFIPLLPIFCYLWV. Residues 399–400 lie on the Virion surface side of the membrane; sequence SI.

The protein belongs to the orthohepadnavirus major surface antigen family. In its internal form (Li-HBsAg), interacts with the capsid protein and with the isoform S. Interacts with host chaperone CANX. As to quaternary structure, associates with host chaperone CANX through its pre-S2 N glycan; this association may be essential for isoform M proper secretion. In terms of assembly, interacts with isoform L. Interacts with the antigens of satellite virus HDV (HDVAgs); this interaction is required for encapsidation of HDV genomic RNA. Isoform M is N-terminally acetylated by host at a ratio of 90%, and N-glycosylated by host at the pre-S2 region. Post-translationally, myristoylated.

It localises to the virion membrane. In terms of biological role, the large envelope protein exists in two topological conformations, one which is termed 'external' or Le-HBsAg and the other 'internal' or Li-HBsAg. In its external conformation the protein attaches the virus to cell receptors and thereby initiating infection. This interaction determines the species specificity and liver tropism. This attachment induces virion internalization predominantly through caveolin-mediated endocytosis. The large envelope protein also assures fusion between virion membrane and endosomal membrane. In its internal conformation the protein plays a role in virion morphogenesis and mediates the contact with the nucleocapsid like a matrix protein. Functionally, the middle envelope protein plays an important role in the budding of the virion. It is involved in the induction of budding in a nucleocapsid independent way. In this process the majority of envelope proteins bud to form subviral lipoprotein particles of 22 nm of diameter that do not contain a nucleocapsid. This is Large envelope protein from Homo sapiens (Human).